The chain runs to 309 residues: NAD kinase (309 aa).

The active-site Proton acceptor is the D89. NAD(+) contacts are provided by residues 89–90, 163–164, H174, R191, D193, and 204–209; these read DG, NE, and TAYALS.

The protein belongs to the NAD kinase family. The cofactor is a divalent metal cation.

The protein resides in the cytoplasm. It catalyses the reaction NAD(+) + ATP = ADP + NADP(+) + H(+). In terms of biological role, involved in the regulation of the intracellular balance of NAD and NADP, and is a key enzyme in the biosynthesis of NADP. Catalyzes specifically the phosphorylation on 2'-hydroxyl of the adenosine moiety of NAD to yield NADP. This chain is NAD kinase, found in Shewanella baltica (strain OS185).